The following is a 140-amino-acid chain: Nucleoside diphosphate kinase (140 aa).

Residues Lys-11, Phe-59, Arg-87, Thr-93, Arg-104, and Asn-114 each coordinate ATP. Residue His-117 is the Pros-phosphohistidine intermediate of the active site.

Belongs to the NDK family. Homotetramer. Requires Mg(2+) as cofactor.

The protein localises to the cytoplasm. It catalyses the reaction a 2'-deoxyribonucleoside 5'-diphosphate + ATP = a 2'-deoxyribonucleoside 5'-triphosphate + ADP. The enzyme catalyses a ribonucleoside 5'-diphosphate + ATP = a ribonucleoside 5'-triphosphate + ADP. Major role in the synthesis of nucleoside triphosphates other than ATP. The ATP gamma phosphate is transferred to the NDP beta phosphate via a ping-pong mechanism, using a phosphorylated active-site intermediate. The polypeptide is Nucleoside diphosphate kinase (Cereibacter sphaeroides (strain ATCC 17029 / ATH 2.4.9) (Rhodobacter sphaeroides)).